Consider the following 109-residue polypeptide: Spermidine export protein MdtI (109 aa).

4 helical membrane passes run 6–26, 36–56, 64–84, and 88–108; these read WVHA…NVFL, FYGI…SQAV, AYAL…WVLF, and LNNK…MIKL.

This sequence belongs to the drug/metabolite transporter (DMT) superfamily. Small multidrug resistance (SMR) (TC 2.A.7.1) family. MdtI subfamily. As to quaternary structure, forms a complex with MdtJ.

The protein resides in the cell inner membrane. Catalyzes the excretion of spermidine. This chain is Spermidine export protein MdtI, found in Citrobacter koseri (strain ATCC BAA-895 / CDC 4225-83 / SGSC4696).